A 420-amino-acid polypeptide reads, in one-letter code: UDP-N-acetylglucosamine 1-carboxyvinyltransferase (420 aa).

22–23 (KN) serves as a coordination point for phosphoenolpyruvate. Arg-92 contributes to the UDP-N-acetyl-alpha-D-glucosamine binding site. Cys-116 (proton donor) is an active-site residue. Cys-116 bears the 2-(S-cysteinyl)pyruvic acid O-phosphothioketal mark. Residues 121-125 (RPVDQ), Asp-304, and Ile-326 each bind UDP-N-acetyl-alpha-D-glucosamine.

The protein belongs to the EPSP synthase family. MurA subfamily.

The protein resides in the cytoplasm. The enzyme catalyses phosphoenolpyruvate + UDP-N-acetyl-alpha-D-glucosamine = UDP-N-acetyl-3-O-(1-carboxyvinyl)-alpha-D-glucosamine + phosphate. It participates in cell wall biogenesis; peptidoglycan biosynthesis. Cell wall formation. Adds enolpyruvyl to UDP-N-acetylglucosamine. The polypeptide is UDP-N-acetylglucosamine 1-carboxyvinyltransferase (Paraburkholderia phymatum (strain DSM 17167 / CIP 108236 / LMG 21445 / STM815) (Burkholderia phymatum)).